The sequence spans 42 residues: Photosystem I reaction center subunit IX (42 aa).

The chain crosses the membrane as a helical span at residues 8–28 (YLSTIPVVGAIWLTFTAGFII).

Belongs to the PsaJ family.

It is found in the plastid. The protein resides in the chloroplast thylakoid membrane. Functionally, may help in the organization of the PsaE and PsaF subunits. The chain is Photosystem I reaction center subunit IX from Gracilaria tenuistipitata var. liui (Red alga).